The following is a 259-amino-acid chain: 14-3-3-like protein (259 aa).

Residues 238–259 are disordered; it reads MQDPAAGDDREGADMKVEDAEP. Residues 244 to 259 show a composition bias toward basic and acidic residues; that stretch reads GDDREGADMKVEDAEP.

The protein belongs to the 14-3-3 family.

The protein is 14-3-3-like protein of Chlamydomonas reinhardtii (Chlamydomonas smithii).